Consider the following 391-residue polypeptide: Solute carrier family 35 member F2 (391 aa).

Helical transmembrane passes span 39 to 59, 73 to 93, 108 to 128, 137 to 157, 165 to 185, 200 to 220, 230 to 250, 267 to 287, 294 to 314, and 318 to 338; these read MLLSVALGQVLSLLICGIRLT, LFQSFLNYILLFLVYTTTLAV, WWKYMFLGIIDIEATYLVVKA, IQLLNCFVIPVVILLSWFFLL, FIGAIACILGIGCMAGADVLM, LIGDVLVLGGATLYGISSVCQ, VELLGMIGLFGSFFSGIQLAI, LLYVGFTACMFGLYSFMPVVI, AINLSMLTAELYTFFCGLFLF, and FSGLYLLSFFTILLGLVFYFS. A disordered region spans residues 361 to 391; it reads VELPSSGQLEPSVTYTSLSQETEEEPRVRVA. Residues 365–380 are compositionally biased toward polar residues; sequence SSGQLEPSVTYTSLSQ.

Belongs to the SLC35F solute transporter family.

The protein localises to the membrane. Functionally, putative solute transporter. The sequence is that of Solute carrier family 35 member F2 (slc35f2) from Xenopus tropicalis (Western clawed frog).